The primary structure comprises 621 residues: Laccase-2 (621 aa).

The first 23 residues, 1-23 (MMKSFFSAAALLLGLVAPSAVLA), serve as a signal peptide directing secretion. Positions 24 to 48 (APSLPGVPREVTRDLLRPVEERQSS) are excised as a propeptide. A disulfide bridge connects residues Cys49 and Cys57. 2 Plastocyanin-like domains span residues 78–201 (TRTY…IVVN) and 210–367 (IDLG…LPTN). A glycan (N-linked (GlcNAc...) asparagine) is linked at Asn133. Residues His138, His140, His183, and His185 each coordinate Cu cation. Intrachain disulfides connect Cys159–Cys586 and Cys343–Cys377. Residues Asn261, Asn276, Asn289, Asn325, and Asn334 are each glycosylated (N-linked (GlcNAc...) asparagine). Asn401, Asn421, and Asn441 each carry an N-linked (GlcNAc...) asparagine glycan. The region spanning 430-566 (DKPIVDYVIA…GGLSVQYLER (137 aa)) is the Plastocyanin-like 3 domain. Positions 476, 479, 481, 548, 549, 550, and 554 each coordinate Cu cation. A propeptide spanning residues 606-621 (KVKKWVGEHPDWYIKN) is cleaved from the precursor.

Belongs to the multicopper oxidase family. As to quaternary structure, monomer. Cu cation serves as cofactor. In terms of processing, proteolytically processed at both its N-terminus and its C-terminus.

The protein localises to the secreted. The enzyme catalyses 4 hydroquinone + O2 = 4 benzosemiquinone + 2 H2O. In terms of biological role, probably involved in lignin degradation and in the detoxification of lignin-derived products in its natural habitat (herbivorous dung), which is rich in lignin of grasses and straw. Probably involved in melanin synthesis and in perithecia development. The polypeptide is Laccase-2 (LAC2) (Podospora anserina (Pleurage anserina)).